A 906-amino-acid polypeptide reads, in one-letter code: Probable RNA-directed DNA polymerase from transposon BS (906 aa).

The Reverse transcriptase domain occupies 482–758 (AILRVQFFPK…SQAKYLGITL (277 aa)).

Mg(2+) serves as cofactor. The cofactor is Mn(2+).

It catalyses the reaction DNA(n) + a 2'-deoxyribonucleoside 5'-triphosphate = DNA(n+1) + diphosphate. This Drosophila melanogaster (Fruit fly) protein is Probable RNA-directed DNA polymerase from transposon BS.